A 293-amino-acid chain; its full sequence is Nucleotide-binding protein BcerKBAB4_4948 (293 aa).

Residue 14-21 (GMSGAGKT) coordinates ATP. 65 to 68 (DLRG) serves as a coordination point for GTP.

The protein belongs to the RapZ-like family.

Displays ATPase and GTPase activities. The chain is Nucleotide-binding protein BcerKBAB4_4948 from Bacillus mycoides (strain KBAB4) (Bacillus weihenstephanensis).